The sequence spans 119 residues: Anamorsin homolog (119 aa).

Over residues 1 to 15 (MSSSATSTQAFSLKT) the composition is skewed to polar residues. Disordered stretches follow at residues 1–21 (MSSS…PIPD) and 33–119 (LKQA…TDDV). 4 residues coordinate [2Fe-2S] cluster: cysteine 42, cysteine 49, cysteine 52, and cysteine 54. The tract at residues 42–54 (CTTRRRACKNCVC) is fe-S binding site A. Cysteine 81, cysteine 84, cysteine 92, and cysteine 95 together coordinate [4Fe-4S] cluster. 2 short sequence motifs (cx2C motif) span residues 81 to 84 (CGNC) and 92 to 95 (CANC). Positions 81-95 (CGNCSKGDAFRCANC) are fe-S binding site B.

It belongs to the anamorsin family. Monomer. The cofactor is [2Fe-2S] cluster. Requires [4Fe-4S] cluster as cofactor.

The protein localises to the cytoplasm. It localises to the mitochondrion intermembrane space. In terms of biological role, component of the cytosolic iron-sulfur (Fe-S) protein assembly (CIA) machinery. Required for the maturation of extramitochondrial Fe-S proteins. Part of an electron transfer chain functioning in an early step of cytosolic Fe-S biogenesis, facilitating the de novo assembly of a [4Fe-4S] cluster on the cytosolic Fe-S scaffold complex. Electrons are transferred from NADPH via a FAD- and FMN-containing diflavin oxidoreductase. Together with the diflavin oxidoreductase, also required for the assembly of the diferric tyrosyl radical cofactor of ribonucleotide reductase (RNR), probably by providing electrons for reduction during radical cofactor maturation in the catalytic small subunit. The protein is Anamorsin homolog of Leishmania infantum.